The chain runs to 180 residues: UPF0690 protein C1orf52 homolog (180 aa).

Disordered regions lie at residues 1–66 (MAAE…SVTR) and 96–180 (KIWK…KKKK). Over residues 48–61 (KQAEKRLPGPDELF) the composition is skewed to basic and acidic residues. T65 carries the post-translational modification Phosphothreonine. Y130 bears the Phosphotyrosine mark. A compositionally biased stretch (acidic residues) spans 149–160 (EGEETVESDDDK). The residue at position 156 (S156) is a Phosphoserine. Residues 161-180 (DERASKIRRVEPGEAAKKKK) show a composition bias toward basic and acidic residues.

The protein belongs to the UPF0690 family.

This chain is UPF0690 protein C1orf52 homolog, found in Mus musculus (Mouse).